The primary structure comprises 432 residues: Glutamate-1-semialdehyde 2,1-aminomutase (432 aa).

Lysine 265 carries the post-translational modification N6-(pyridoxal phosphate)lysine.

The protein belongs to the class-III pyridoxal-phosphate-dependent aminotransferase family. HemL subfamily. In terms of assembly, homodimer. It depends on pyridoxal 5'-phosphate as a cofactor.

The protein resides in the cytoplasm. It carries out the reaction (S)-4-amino-5-oxopentanoate = 5-aminolevulinate. It functions in the pathway porphyrin-containing compound metabolism; protoporphyrin-IX biosynthesis; 5-aminolevulinate from L-glutamyl-tRNA(Glu): step 2/2. The sequence is that of Glutamate-1-semialdehyde 2,1-aminomutase from Histophilus somni (strain 2336) (Haemophilus somnus).